Consider the following 200-residue polypeptide: ATP-dependent Clp protease proteolytic subunit 2 (200 aa).

The Nucleophile role is filled by Ser-101. His-126 is a catalytic residue.

Belongs to the peptidase S14 family. Fourteen ClpP subunits assemble into 2 heptameric rings which stack back to back to give a disk-like structure with a central cavity, resembling the structure of eukaryotic proteasomes.

It is found in the cytoplasm. It carries out the reaction Hydrolysis of proteins to small peptides in the presence of ATP and magnesium. alpha-casein is the usual test substrate. In the absence of ATP, only oligopeptides shorter than five residues are hydrolyzed (such as succinyl-Leu-Tyr-|-NHMec, and Leu-Tyr-Leu-|-Tyr-Trp, in which cleavage of the -Tyr-|-Leu- and -Tyr-|-Trp bonds also occurs).. In terms of biological role, cleaves peptides in various proteins in a process that requires ATP hydrolysis. Has a chymotrypsin-like activity. Plays a major role in the degradation of misfolded proteins. This is ATP-dependent Clp protease proteolytic subunit 2 from Prochlorococcus marinus (strain MIT 9313).